The following is a 304-amino-acid chain: Acetyl-coenzyme A carboxylase carboxyl transferase subunit beta (304 aa).

The CoA carboxyltransferase N-terminal domain occupies 29–298 (LWTKCVSCAA…QAYRPSPQAS (270 aa)). Residues Cys33, Cys36, Cys52, and Cys55 each contribute to the Zn(2+) site. A C4-type zinc finger spans residues 33–55 (CVSCAALHYTKDFQLNLCVCPAC).

The protein belongs to the AccD/PCCB family. Acetyl-CoA carboxylase is a heterohexamer composed of biotin carboxyl carrier protein (AccB), biotin carboxylase (AccC) and two subunits each of ACCase subunit alpha (AccA) and ACCase subunit beta (AccD). Requires Zn(2+) as cofactor.

The protein resides in the cytoplasm. The catalysed reaction is N(6)-carboxybiotinyl-L-lysyl-[protein] + acetyl-CoA = N(6)-biotinyl-L-lysyl-[protein] + malonyl-CoA. Its pathway is lipid metabolism; malonyl-CoA biosynthesis; malonyl-CoA from acetyl-CoA: step 1/1. Its function is as follows. Component of the acetyl coenzyme A carboxylase (ACC) complex. Biotin carboxylase (BC) catalyzes the carboxylation of biotin on its carrier protein (BCCP) and then the CO(2) group is transferred by the transcarboxylase to acetyl-CoA to form malonyl-CoA. The protein is Acetyl-coenzyme A carboxylase carboxyl transferase subunit beta of Gloeobacter violaceus (strain ATCC 29082 / PCC 7421).